We begin with the raw amino-acid sequence, 502 residues long: GTPase Obg (502 aa).

One can recognise an Obg domain in the interval Asn2 to Met159. The region spanning Ala160–Gln341 is the OBG-type G domain. GTP contacts are provided by residues Gly166–Ser173, Phe191–Gln195, Asp212–Gly215, Asn292–Asp295, and Ser322–Val324. Residues Ser173 and Thr193 each coordinate Mg(2+). The OCT domain maps to Asp364–Pro444.

It belongs to the TRAFAC class OBG-HflX-like GTPase superfamily. OBG GTPase family. Monomer. Mg(2+) is required as a cofactor.

The protein resides in the cytoplasm. An essential GTPase which binds GTP, GDP and possibly (p)ppGpp with moderate affinity, with high nucleotide exchange rates and a fairly low GTP hydrolysis rate. Plays a role in control of the cell cycle, stress response, ribosome biogenesis and in those bacteria that undergo differentiation, in morphogenesis control. The sequence is that of GTPase Obg from Corynebacterium efficiens (strain DSM 44549 / YS-314 / AJ 12310 / JCM 11189 / NBRC 100395).